The chain runs to 152 residues: Non-specific lipid transfer protein GPI-anchored 8 (152 aa).

An N-terminal signal peptide occupies residues 1–23 (MNITRILGVVTTVVILYSVQVTA). 3 disulfides stabilise this stretch: Cys-42-Cys-56, Cys-57-Cys-98, and Cys-70-Cys-107. The N-linked (GlcNAc...) asparagine glycan is linked to Asn-108. A lipid anchor (GPI-anchor amidated serine) is attached at Ser-124. Residues 125 to 152 (GNSFSTKKNTALAITFFGFSFVFLGMII) constitute a propeptide, removed in mature form.

It belongs to the plant LTP family.

The protein localises to the cell membrane. Functionally, probable lipid transfer protein. This is Non-specific lipid transfer protein GPI-anchored 8 from Arabidopsis thaliana (Mouse-ear cress).